The sequence spans 208 residues: Attacin-A (208 aa).

Positions 1-20 (MQSFKICFFISCLSVVLVKG) are cleaved as a signal peptide. The propeptide occupies 21-47 (QFGGTVSSNPNGGLDVNARLSKTIGDP).

Hemolymph and fat body.

It is found in the secreted. Hemolymph antibacterial protein against Gram-negative bacteria. The protein is Attacin-A of Glossina morsitans morsitans (Savannah tsetse fly).